Here is a 1022-residue protein sequence, read N- to C-terminus: SAGGISVPGPMGPSGPRGLPGPPGAPGPQGFQGPPGEPGEPGASGPMGPRGPPGPPGKNGDDGEAGKPGRPGERGPPGPQGARGLPGTAGLPGMKGHRGFSGLDGAKGDAGPAGPKGEPGSPGENGAPGQMGPRGLPGERGRPGASGPAGARGNDGAAGAAGPPGPTGPAGPPGFPGAVGAKGEAGPQGARGSEGPQGVRGEPGPPGPAGAAGPAGNPGADGQPGAKGANGAPGIAGAPGFPGARGPSGPQGPSGAPGPKGNSGEPGAPGSKGDTGAKGEPGPTGIQGPPGPAGEEGKRGARGEPGPTGLPGPPGERGGPGSRGFPGADGVAGPKGPAGERGSPGPAGPKGSPGEAGRPGEAGLPGAKGLTGSPGSPGPDGKTGPPGPAGQDGRPGPPGPPGARGQAGVMGFPGPKGAAGEPGKAGERGVPGPPGAVGPAGKDGEAGAQGPPGPAGPAGERGEQGPAGSPGFQGLPGPAGPPGEAGKPGEQGVPGDLGAPGPSGARGERGFPGERGVQGPPGPAGPRGSNGAPGNDGAKGDAGAPGAPGSQGAPGLQGMPGERGAAGLPGPKGDRGDAGPKGADGAPGKDGVRGLTGPIGPPGPAGAPGDKGESGPSGPAGPTGARGAPGDRGEPGPPGPAGFAGPPGADGQPGAKGEPGDAGAKGDAGPPGPAGPTGPPGPIGNVGAPGPKGARGSAGPPGATGFPGAAGRVGPPGPSGNAGPPGPPGPVGKEGGKGPRGETGPAGRPGEVSPPGPPGPTGEKGSPGADGPAGAPGTPGPQGISGQRGVVGLPGQRGERGFPGLPGPSGEPGKQGPSGSSGERGPPGPVGPPGLAGPPGESGREGSPGAEGSPGRDGSPGPKGDRGESGPAGPPGAPGAPGAPGPVGPAGKSGDRGETGPAGPAGPAGPAGARGPAGPQGPRGDKGETGEQGDRGIKGHRGFSGLQGPAGPPGSPGEQGPSGASGPAGPRGPPGSAGSPGKDGLNGLPGPIGPPGPRGRTGDAGPVGPPGPPGPPGPPGPP.

Residues 1–1022 (SAGGISVPGP…PGPPGPPGPP (1022 aa)) form a disordered region. 11 positions are modified to 4-hydroxyproline: P20, P23, P26, P35, P38, P41, P56, P71, P77, P86, and P92. Low complexity predominate over residues 28–47 (PQGFQGPPGEPGEPGASGPM). The segment covering 59 to 73 (NGDDGEAGKPGRPGE) has biased composition (basic and acidic residues). At K95 the chain carries 5-hydroxylysine; alternate. The O-linked (Gal...) hydroxylysine; alternate glycan is linked to K95. Phosphoserine is present on S101. Residues 109-125 (DAGPAGPKGEPGSPGEN) are compositionally biased toward low complexity. Residues P119, P122, P128, P137, P143, P164, P173, P176, P203, P206, P218, P224, P233, P239, P242, and P257 each carry the 4-hydroxyproline modification. Over residues 143–161 (PGASGPAGARGNDGAAGAA) the composition is skewed to low complexity. Positions 163 to 175 (PPGPTGPAGPPGF) are enriched in pro residues. Low complexity predominate over residues 209 to 259 (AGAAGPAGNPGADGQPGAKGANGAPGIAGAPGFPGARGPSGPQGPSGAPGP). K260 carries the post-translational modification 5-hydroxylysine. 8 positions are modified to 4-hydroxyproline: P266, P269, P281, P290, P305, P311, P320, and P326. Residues 315-324 (GERGGPGSRG) show a composition bias toward gly residues. A 5-hydroxylysine modification is found at K335. 4-hydroxyproline occurs at positions 344, 353, 359, 365, 374, 377, 386, 395, 401, 413, 422, 431, 434, 452, 470, 476, 482, 488, 494, 500, 512, 521, 533, 545, 548, 554, 560, and 569. Residues 368-394 (KGLTGSPGSPGPDGKTGPPGPAGQDGR) are compositionally biased toward low complexity. Residues 403-422 (ARGQAGVMGFPGPKGAAGEP) are compositionally biased toward low complexity. Residues 464–491 (QGPAGSPGFQGLPGPAGPPGEAGKPGEQ) are compositionally biased toward low complexity. The segment covering 530-557 (NGAPGNDGAKGDAGAPGAPGSQGAPGLQ) has biased composition (low complexity). Position 581 is a 5-hydroxylysine (K581). P587, P602, and P608 each carry 4-hydroxyproline. Residues 614-628 (SGPSGPAGPTGARGA) show a composition bias toward low complexity. S617 bears the Phosphoserine mark. 8 positions are modified to 4-hydroxyproline: P629, P635, P638, P647, P653, P671, P680, and P689. Over residues 641–668 (AGFAGPPGADGQPGAKGEPGDAGAKGDA) the composition is skewed to low complexity. Residues 670–682 (PPGPAGPTGPPGP) are compositionally biased toward pro residues. K692 is subject to 5-hydroxylysine. A compositionally biased stretch (low complexity) spans 697 to 713 (SAGPPGATGFPGAAGRV). A 4-hydroxyproline mark is found at P701 and P707. A 3-hydroxyproline modification is found at P715. P716, P725, P728, P749, P758, P767, P776, P794, P803, P806, P812, P827, P833, P839, P848, and P854 each carry 4-hydroxyproline. A compositionally biased stretch (low complexity) spans 742-751 (ETGPAGRPGE). Over residues 761–776 (TGEKGSPGADGPAGAP) the composition is skewed to low complexity. A compositionally biased stretch (pro residues) spans 826 to 836 (PPGPVGPPGLA). Residues 838–853 (PPGESGREGSPGAEGS) show a composition bias toward low complexity. 5-hydroxylysine is present on K863. Residues 872-887 (AGPPGAPGAPGAPGPV) are compositionally biased toward pro residues. 3 positions are modified to 4-hydroxyproline: P875, P878, and P881. Low complexity predominate over residues 908 to 922 (AGPAGARGPAGPQGP). Residues 923 to 937 (RGDKGETGEQGDRGI) are compositionally biased toward basic and acidic residues. Residue K926 is modified to 5-hydroxylysine. K938 bears the 5-hydroxylysine; alternate mark. O-linked (Gal...) hydroxylysine; alternate glycosylation is present at K938. 4-hydroxyproline is present on residues P953, P956, P974, and P989. Positions 956–989 (PGEQGPSGASGPAGPRGPPGSAGSPGKDGLNGLP) are enriched in low complexity. P994 carries the post-translational modification 3-hydroxyproline. Residue P995 is modified to 4-hydroxyproline. A compositionally biased stretch (pro residues) spans 1007–1022 (VGPPGPPGPPGPPGPP). P1009 carries the 3-hydroxyproline modification. P1010 carries the post-translational modification 4-hydroxyproline. P1012 bears the 3-hydroxyproline mark. P1013 is modified (4-hydroxyproline). A 3-hydroxyproline modification is found at P1015. 4-hydroxyproline is present on residues P1016, P1019, and P1022.

The protein belongs to the fibrillar collagen family. In terms of assembly, trimers of one alpha 2(I) and two alpha 1(I) chains. In terms of processing, prolines at the third position of the tripeptide repeating unit (G-X-Y) are hydroxylated in some or all of the chains. As to expression, expressed in bone.

It is found in the secreted. The protein localises to the extracellular space. It localises to the extracellular matrix. In terms of biological role, type I collagen is a member of group I collagen (fibrillar forming collagen). The sequence is that of Collagen alpha-1(I) chain from Mylodon darwinii (Giant ground sloth).